We begin with the raw amino-acid sequence, 111 residues long: Large ribosomal subunit protein uL22 (111 aa).

This sequence belongs to the universal ribosomal protein uL22 family. Part of the 50S ribosomal subunit.

In terms of biological role, this protein binds specifically to 23S rRNA; its binding is stimulated by other ribosomal proteins, e.g. L4, L17, and L20. It is important during the early stages of 50S assembly. It makes multiple contacts with different domains of the 23S rRNA in the assembled 50S subunit and ribosome. The globular domain of the protein is located near the polypeptide exit tunnel on the outside of the subunit, while an extended beta-hairpin is found that lines the wall of the exit tunnel in the center of the 70S ribosome. This is Large ribosomal subunit protein uL22 from Polynucleobacter necessarius subsp. necessarius (strain STIR1).